The sequence spans 414 residues: Isocitrate dehydrogenase [NADP] cytoplasmic (414 aa).

S2 carries the post-translational modification N-acetylserine. Y42 carries the phosphotyrosine modification. 75 to 77 (TIT) lines the NADP(+) pocket. T77 serves as a coordination point for substrate. K81 carries the N6-acetyllysine modification. An NADP(+)-binding site is contributed by R82. Substrate contacts are provided by residues 94-100 (SPNGTIR) and R109. K126 is modified (N6-succinyllysine). Residues R132 and K212 each coordinate substrate. An N6-acetyllysine mark is found at K224, K233, and K243. D252 serves as a coordination point for Mn(2+). K260 serves as a coordination point for NADP(+). Mn(2+) is bound by residues D275 and D279. 310 to 315 (GTVTRH) serves as a coordination point for NADP(+). The residue at position 321 (K321) is an N6-acetyllysine. N328 provides a ligand contact to NADP(+). S389 is modified (phosphoserine). K400 carries the post-translational modification N6-succinyllysine.

Belongs to the isocitrate and isopropylmalate dehydrogenases family. In terms of assembly, homodimer. Mg(2+) is required as a cofactor. It depends on Mn(2+) as a cofactor. Post-translationally, acetylation at Lys-374 dramatically reduces catalytic activity. In terms of tissue distribution, highly expressed in the liver followed by kidney, lower expression in spleen, brain and lung.

The protein localises to the cytoplasm. It localises to the cytosol. The enzyme catalyses D-threo-isocitrate + NADP(+) = 2-oxoglutarate + CO2 + NADPH. Irreversibly inhibited by Cd(2+) concentrations above 50 uM. Functionally, catalyzes the NADP(+)-dependent oxidative decarboxylation of isocitrate (D-threo-isocitrate) to 2-ketoglutarate (2-oxoglutarate), which is required by other enzymes such as the phytanoyl-CoA dioxygenase. Plays a critical role in the generation of NADPH, an important cofactor in many biosynthesis pathways. May act as a corneal epithelial crystallin and may be involved in maintaining corneal epithelial transparency. This chain is Isocitrate dehydrogenase [NADP] cytoplasmic (Idh1), found in Mus musculus (Mouse).